The following is a 328-amino-acid chain: Phosphate acyltransferase (328 aa).

It belongs to the PlsX family. Homodimer. Probably interacts with PlsY.

It is found in the cytoplasm. It carries out the reaction a fatty acyl-[ACP] + phosphate = an acyl phosphate + holo-[ACP]. Its pathway is lipid metabolism; phospholipid metabolism. Catalyzes the reversible formation of acyl-phosphate (acyl-PO(4)) from acyl-[acyl-carrier-protein] (acyl-ACP). This enzyme utilizes acyl-ACP as fatty acyl donor, but not acyl-CoA. This Geobacillus thermodenitrificans (strain NG80-2) protein is Phosphate acyltransferase.